Reading from the N-terminus, the 625-residue chain is 1-deoxy-D-xylulose-5-phosphate synthase (625 aa).

Residues histidine 84 and glycine 125–serine 127 each bind thiamine diphosphate. Position 156 (aspartate 156) interacts with Mg(2+). Thiamine diphosphate-binding positions include glycine 157–alanine 158, asparagine 185, phenylalanine 292, and glutamate 373. Mg(2+) is bound at residue asparagine 185.

This sequence belongs to the transketolase family. DXPS subfamily. Homodimer. Mg(2+) serves as cofactor. Requires thiamine diphosphate as cofactor.

It carries out the reaction D-glyceraldehyde 3-phosphate + pyruvate + H(+) = 1-deoxy-D-xylulose 5-phosphate + CO2. It participates in metabolic intermediate biosynthesis; 1-deoxy-D-xylulose 5-phosphate biosynthesis; 1-deoxy-D-xylulose 5-phosphate from D-glyceraldehyde 3-phosphate and pyruvate: step 1/1. Functionally, catalyzes the acyloin condensation reaction between C atoms 2 and 3 of pyruvate and glyceraldehyde 3-phosphate to yield 1-deoxy-D-xylulose-5-phosphate (DXP). In Marinomonas sp. (strain MWYL1), this protein is 1-deoxy-D-xylulose-5-phosphate synthase.